A 390-amino-acid polypeptide reads, in one-letter code: tRNA (guanine(9)-N1)-methyltransferase (390 aa).

The segment at 1–72 is disordered; it reads MDIDEESYLN…RTAQLAEGYA (72 aa). Over residues 43–59 the composition is skewed to basic and acidic residues; the sequence is ARLEEIKPLKRAAERER. An SAM-dependent MTase TRM10-type domain is found at 92 to 340; the sequence is KERKEAQRRI…AVIPIRKYAP (249 aa). Residues 246–247, Gly-266, 270–274, Cys-278, Leu-292, and 305–307 contribute to the S-adenosyl-L-methionine site; these read LS, DRNRH, and KVL. Catalysis depends on Asp-270, which acts as the Proton acceptor. Residues 343-390 form a disordered region; sequence KTKRAKTETKRNEKEEEEVECTSAEGEEDIGVIEESAEVDPEDVFSNQ. Residues 347–356 show a composition bias toward basic and acidic residues; the sequence is AKTETKRNEK. Positions 357 to 390 are enriched in acidic residues; the sequence is EEEEVECTSAEGEEDIGVIEESAEVDPEDVFSNQ.

This sequence belongs to the class IV-like SAM-binding methyltransferase superfamily. TRM10 family. Monomer.

The protein resides in the cytoplasm. It is found in the nucleus. The enzyme catalyses guanosine(9) in tRNA + S-adenosyl-L-methionine = N(1)-methylguanosine(9) in tRNA + S-adenosyl-L-homocysteine + H(+). S-adenosyl-L-methionine-dependent guanine N(1)-methyltransferase that catalyzes the formation of N(1)-methylguanine at position 9 (m1G9) in cytoplasmic tRNA. The polypeptide is tRNA (guanine(9)-N1)-methyltransferase (Cryptococcus neoformans var. neoformans serotype D (strain JEC21 / ATCC MYA-565) (Filobasidiella neoformans)).